The primary structure comprises 182 residues: UPF0397 protein SPH_0594 (182 aa).

5 helical membrane passes run 10–30, 46–66, 73–93, 109–129, and 148–168; these read VVAVGIGAALFVVIGMINIPT, LLSIIFGPIIGLLVGVIGHAI, YGLWWTWIIASGLFGLVVGLF, ILIFNLIQLLANALVWGVLAP, and IVAGIANGVSVAIAGTLLLLA.

This sequence belongs to the UPF0397 family.

It is found in the cell membrane. The chain is UPF0397 protein SPH_0594 from Streptococcus pneumoniae (strain Hungary19A-6).